The chain runs to 715 residues: Probable GTP diphosphokinase RSH3, chloroplastic (715 aa).

The N-terminal 64 residues, 1–64, are a transit peptide targeting the chloroplast; the sequence is MVVATTIALY…LLFSGASVKS (64 aa). A compositionally biased stretch (low complexity) spans 65-74; it reads SSSSSSSHPS. The disordered stretch occupies residues 65–84; it reads SSSSSSSHPSVGEELASIRH. One can recognise an HD domain in the interval 237-341; that stretch reads YLQHCVETAM…IKLADRLHNM (105 aa).

It belongs to the RelA/SpoT family. Expressed in roots, hypocotyls, shoots, cotyledons, rosette and cauline leaves, stems, petals, sepals, stamens, pistils and siliques.

It localises to the plastid. It is found in the chloroplast. It catalyses the reaction GTP + ATP = guanosine 3'-diphosphate 5'-triphosphate + AMP. Functionally, possesses ppGpp (guanosine 3'-diphosphate 5'-diphosphate) synthetase activity in vitro and is able to functionally complement E.coli relA mutants. May be involved in a rapid plant ppGpp-mediated response to pathogens and other stresses. This Arabidopsis thaliana (Mouse-ear cress) protein is Probable GTP diphosphokinase RSH3, chloroplastic (RSH3).